The sequence spans 328 residues: Phospholipid scramblase 1 (328 aa).

A proline-rich domain (PRD) region spans residues Met-1–Pro-93. Positions Met-1–Pro-96 are disordered. Residues Met-1 to Lys-297 lie on the Cytoplasmic side of the membrane. An SH3-binding 1 motif is present at residues Pro-18–Pro-26. The PPxY motif motif lies at Pro-22–Tyr-25. The segment covering Ala-28–Gln-47 has biased composition (low complexity). A compositionally biased stretch (pro residues) spans Pro-49–Pro-64. The SH3-binding 2 signature appears at Pro-56–Pro-64. Tyr-83 is modified (phosphotyrosine; by ABL). Positions Pro-93–Pro-101 match the SH3-binding 3 motif. Thr-170 is subject to Phosphothreonine; by PKC/PRKCD. Residues Cys-193, Cys-194, Cys-197, and Cys-198 are each lipidated (S-palmitoyl cysteine). Positions Ser-269–Phe-275 match the Nuclear localization signal motif. The chain crosses the membrane as a helical span at residues Met-298–Phe-314. The Extracellular portion of the chain corresponds to Glu-315–Gln-328.

It belongs to the phospholipid scramblase family. As to quaternary structure, forms homooligomers in the presence of calcium. Interacts with ABL. Interacts with RELT, RELL1 and RELL2. Interacts with OXSR1 in the presence of RELT. Interacts with OCLN, TOP2A and TOP2B. Interacts with TRPC1, TRPC4 and TRPC5. Interacts with ILDR1. Ca(2+) serves as cofactor. Mg(2+) is required as a cofactor. It depends on Zn(2+) as a cofactor. Post-translationally, phosphorylation at Thr-170 by PKC/PKCD increases its phospholipid scramblase activity during both cell stimulation and apoptosis. Phosphorylated by OXSR1 in the presence of RELT. Palmitoylation is required for its phospholipid scramblase activity. Palmitoylation regulates its localization to the cell membrane or the nucleus; trafficking to the cell membrane is dependent upon palmitoylation whereas in the absence of palmitoylation, localizes to the nucleus. In terms of tissue distribution, highly expressed in kidney, lung, liver and bone marrow, slightly in spleen, heart and macrophage.

Its subcellular location is the cell membrane. It localises to the nucleus. It is found in the cytoplasm. The protein localises to the perinuclear region. It carries out the reaction a 1,2-diacyl-sn-glycero-3-phosphocholine(in) = a 1,2-diacyl-sn-glycero-3-phosphocholine(out). It catalyses the reaction a 1,2-diacyl-sn-glycero-3-phosphoethanolamine(in) = a 1,2-diacyl-sn-glycero-3-phosphoethanolamine(out). The enzyme catalyses a 1,2-diacyl-sn-glycero-3-phospho-L-serine(in) = a 1,2-diacyl-sn-glycero-3-phospho-L-serine(out). In terms of biological role, catalyzes calcium-induced ATP-independent rapid bidirectional and non-specific distribution of phospholipids (lipid scrambling or lipid flip-flop) between the inner and outer leaflet of the plasma membrane resulting in collapse of the phospholipid asymmetry which leads to phosphatidylserine externalization on the cell surface. Mediates calcium-dependent phosphatidylserine externalization and apoptosis in neurons via its association with TRPC5. Also exhibits magnesium-dependent nuclease activity against double-stranded DNA and RNA but not single-stranded DNA and can enhance DNA decatenation mediated by TOP2A. Negatively regulates FcR-mediated phagocytosis in differentiated macrophages. May contribute to cytokine-regulated cell proliferation and differentiation. This chain is Phospholipid scramblase 1 (Plscr1), found in Mus musculus (Mouse).